The chain runs to 466 residues: Soluble pyridine nucleotide transhydrogenase (466 aa).

36–45 contributes to the FAD binding site; that stretch reads EKESSVGGGC.

This sequence belongs to the class-I pyridine nucleotide-disulfide oxidoreductase family. FAD is required as a cofactor.

The protein localises to the cytoplasm. It catalyses the reaction NAD(+) + NADPH = NADH + NADP(+). In terms of biological role, conversion of NADPH, generated by peripheral catabolic pathways, to NADH, which can enter the respiratory chain for energy generation. This Vibrio parahaemolyticus serotype O3:K6 (strain RIMD 2210633) protein is Soluble pyridine nucleotide transhydrogenase.